A 442-amino-acid chain; its full sequence is tRNA modification GTPase MnmE (442 aa).

Residues arginine 24, glutamate 82, and lysine 122 each coordinate (6S)-5-formyl-5,6,7,8-tetrahydrofolate. Positions 219–366 constitute a TrmE-type G domain; that stretch reads GFKVALVGEP…LRRALKREIE (148 aa). Asparagine 229 contributes to the K(+) binding site. Residues 229–234, 248–254, and 273–276 contribute to the GTP site; these read NAGKST, TDIAGTT, and DTAG. A Mg(2+)-binding site is contributed by serine 233. K(+) contacts are provided by threonine 248, isoleucine 250, and threonine 253. Threonine 254 is a Mg(2+) binding site. A (6S)-5-formyl-5,6,7,8-tetrahydrofolate-binding site is contributed by lysine 442.

The protein belongs to the TRAFAC class TrmE-Era-EngA-EngB-Septin-like GTPase superfamily. TrmE GTPase family. In terms of assembly, homodimer. Heterotetramer of two MnmE and two MnmG subunits. K(+) is required as a cofactor.

It localises to the cytoplasm. Exhibits a very high intrinsic GTPase hydrolysis rate. Involved in the addition of a carboxymethylaminomethyl (cmnm) group at the wobble position (U34) of certain tRNAs, forming tRNA-cmnm(5)s(2)U34. In Agrobacterium fabrum (strain C58 / ATCC 33970) (Agrobacterium tumefaciens (strain C58)), this protein is tRNA modification GTPase MnmE.